The sequence spans 532 residues: Putative F-box/LRR-repeat protein At3g42770 (532 aa).

Residues 1–46 form the F-box domain; that stretch reads MNCLPDELLVQILSFLPTKEATSTSLLSKRWRTLFTLSPNLDFDNS. LRR repeat units lie at residues 113–135, 279–305, and 398–420; these read VSEL…IFTS, IRNV…EIPM, and MNDL…SPKL.

In Arabidopsis thaliana (Mouse-ear cress), this protein is Putative F-box/LRR-repeat protein At3g42770.